A 313-amino-acid chain; its full sequence is Porphobilinogen deaminase (313 aa).

The residue at position 243 (Cys-243) is an S-(dipyrrolylmethanemethyl)cysteine.

It belongs to the HMBS family. Monomer. Requires dipyrromethane as cofactor.

The enzyme catalyses 4 porphobilinogen + H2O = hydroxymethylbilane + 4 NH4(+). It functions in the pathway porphyrin-containing compound metabolism; protoporphyrin-IX biosynthesis; coproporphyrinogen-III from 5-aminolevulinate: step 2/4. Tetrapolymerization of the monopyrrole PBG into the hydroxymethylbilane pre-uroporphyrinogen in several discrete steps. The chain is Porphobilinogen deaminase from Bordetella petrii (strain ATCC BAA-461 / DSM 12804 / CCUG 43448).